The sequence spans 1549 residues: Trichohyalin (1549 aa).

Positions 1–91 (MSPLLRSIFN…AAACYYALGQ (91 aa)) are S-100-like. 2 EF-hand domains span residues 23–48 (CDGT…LRKP) and 49–84 (HDPE…VAAA). Residues Thr-27, Asp-32, Asp-62, Asp-64, Asp-66, and Glu-73 each contribute to the Ca(2+) site. 4 disordered regions span residues 97–125 (EKEA…PQDR), 157–180 (LQRR…GREL), 262–359 (LRRK…KQEQ), and 404–448 (QREK…RQER). Basic and acidic residues-rich tracts occupy residues 171–180 (LQQRPKGREL), 262–278 (LRRK…RQEQ), and 317–335 (HRQE…ERQQ). The span at 336–348 (EQQISEEVQSLQE) shows a compositional bias: low complexity. The span at 349–359 (DQGRQRLKQEQ) shows a compositional bias: basic and acidic residues. 14 consecutive repeat copies span residues 413 to 448 (ERQY…RQER), 449 to 476 (EKQY…RQER), 477 to 504 (EKQY…RQER), 505 to 532 (ERQY…RQER), 533 to 560 (ERQY…RQER), 561 to 588 (EKQY…RQER), 589 to 616 (EKQY…RQER), 617 to 644 (ERQY…RQER), 645 to 678 (ERQY…RQER), 679 to 706 (ERQY…RQER), 707 to 742 (ERQY…RQVR), 743 to 771 (ERKY…DREK), 772 to 796 (RQYL…RQER), and 797 to 832 (ERQY…RQEL). The interval 413-832 (ERQYREVELQ…ECEKRRRQEL (420 aa)) is 14 X 28 AA approximate tandem repeats. 3 disordered regions span residues 782 to 803 (REEE…YREE), 839 to 942 (EELQ…RKFR), and 980 to 1000 (QLRQ…ERDR). Composition is skewed to basic and acidic residues over residues 850 to 884 (FRDD…DSWV), 895 to 918 (PLQD…KRDS), and 925 to 942 (LLER…RKFR). Repeat copies occupy residues 938–961 (DRKF…YLEE), 962–985 (DRKF…RQER), 986–1021 (DRKF…RQER), 1022–1044 (DRKF…RQER), 1045–1067 (DRKF…RQER), 1068–1090 (DRKF…LRQE), 1091–1121 (RNRK…RQKR), 1122–1144 (DRKF…RQER), 1145–1167 (DRKF…RQER), 1168–1197 (DRKF…RQER), 1198–1227 (DRKF…RQER), 1228–1250 (DRKF…RQER), 1251–1273 (DRKF…RQER), 1274–1296 (DRKF…RQER), 1297–1319 (DRKF…RQER), 1320–1342 (DRKF…RQER), 1343–1368 (DRKF…ELEG), 1369–1391 (VFSQ…QRQR), 1392–1416 (DRKF…VQEQ), 1417–1439 (DRKF…RRRQ), 1440–1461 (QLDQ…RRQE), 1462–1484 (QELR…EEEQ), and 1485–1507 (LRRQ…SRRQ). The tract at residues 938-1507 (DRKFREEEQL…ERDVQQSRRQ (570 aa)) is 23 X 23 AA approximate tandem repeats. A compositionally biased stretch (basic and acidic residues) spans 1489 to 1523 (QQEEQKRRQERDVQQSRRQVWEEDKGRRQVLEAGK). A disordered region spans residues 1489–1549 (QQEEQKRRQE…IQEQRSQYRP (61 aa)).

It belongs to the S100-fused protein family. In terms of assembly, homodimer. Post-translationally, substrate of transglutaminase. Some 200 arginines are probably converted to citrullines by peptidylarginine deimidase. Found in the hard keratinizing tissues such as the inner root sheath (IRS) of hair follicles and medulla, and in the epithelia of the tongue, hoof and rumen.

Its function is as follows. Intermediate filament-associated protein that associates in regular arrays with keratin intermediate filaments (KIF) of the inner root sheath cells of the hair follicle and the granular layer of the epidermis. It later becomes cross-linked to KIF by isodipeptide bonds. It may serve as scaffold protein, together with involucrin, in the organization of the cell envelope or even anchor the cell envelope to the KIF network. It may be involved in its own calcium-dependent postsynthetic processing during terminal differentiation. This is Trichohyalin (TCHH) from Ovis aries (Sheep).